The primary structure comprises 575 residues: Sodium/calcium exchanger NCL2 (575 aa).

3 helical membrane passes run 69–89 (FLPC…YGFL), 112–132 (IVGG…LILV), and 146–166 (VLIG…LLWG). N-linked (GlcNAc...) asparagine glycosylation occurs at Asn179. Helical transmembrane passes span 210-230 (IMAI…FKLH) and 237-257 (VLIG…YQVF). EF-hand domains are found at residues 297–332 (PNVS…INFE) and 337–372 (NSNL…WLDE). Asn298 carries N-linked (GlcNAc...) asparagine glycosylation. Ca(2+) is bound by residues Asp310, Asp312, Asp314, Lys316, Glu321, Asp350, Ser352, Asn354, and Glu361. A run of 5 helical transmembrane segments spans residues 417 to 437 (WTCI…AASA), 457 to 477 (FISF…SAII), 494 to 514 (VYGG…ALVY), 522 to 542 (FSSE…FTSF), and 548 to 568 (LWTC…VYIL).

This sequence belongs to the Ca(2+):cation antiporter (CaCA) (TC 2.A.19) family.

The protein localises to the cell membrane. Its function is as follows. May function as a sodium/calcium exchanger (NCX) and participate in the maintenance of calcium homeostasis. May play a role abiotic stress responses. The protein is Sodium/calcium exchanger NCL2 of Oryza sativa subsp. japonica (Rice).